The following is a 262-amino-acid chain: NAC domain-containing protein 71 (262 aa).

The region spanning L6–K160 is the NAC domain. The DNA-binding element occupies A107–N166.

It localises to the nucleus. Its function is as follows. Transcription factor involved in tissue reunion of wounded inflorescence stems. Required for the division of pith cells in the reunion process, which is dependent on polar-transported auxin and the wound-inducible hormones ethylene and jasmonate. Binds to the promoters of XTH19 and XTH20 to induce their expression via auxin signaling. XTH19 and XTH20 are involved in cell proliferation in the tissue reunion process of incised stems. Involved in hypocotyl graft union formation. Required for the auxin- mediated promotion of vascular tissue proliferation during hypocotyl graft attachment. This Arabidopsis thaliana (Mouse-ear cress) protein is NAC domain-containing protein 71.